A 428-amino-acid chain; its full sequence is Glutamate-1-semialdehyde 2,1-aminomutase (428 aa).

Lys267 carries the N6-(pyridoxal phosphate)lysine modification.

This sequence belongs to the class-III pyridoxal-phosphate-dependent aminotransferase family. HemL subfamily. As to quaternary structure, homodimer. The cofactor is pyridoxal 5'-phosphate.

Its subcellular location is the cytoplasm. The enzyme catalyses (S)-4-amino-5-oxopentanoate = 5-aminolevulinate. It functions in the pathway porphyrin-containing compound metabolism; protoporphyrin-IX biosynthesis; 5-aminolevulinate from L-glutamyl-tRNA(Glu): step 2/2. Its pathway is porphyrin-containing compound metabolism; chlorophyll biosynthesis. This is Glutamate-1-semialdehyde 2,1-aminomutase from Prochlorococcus marinus (strain MIT 9303).